The following is a 295-amino-acid chain: Aspartate carbamoyltransferase catalytic subunit (295 aa).

Residues Arg49 and Thr50 each coordinate carbamoyl phosphate. Lys77 serves as a coordination point for L-aspartate. Residues Arg99, His127, and Gln130 each coordinate carbamoyl phosphate. Residues Arg161 and Arg212 each coordinate L-aspartate. Carbamoyl phosphate contacts are provided by Gly251 and Pro252.

The protein belongs to the aspartate/ornithine carbamoyltransferase superfamily. ATCase family. Heterododecamer (2C3:3R2) of six catalytic PyrB chains organized as two trimers (C3), and six regulatory PyrI chains organized as three dimers (R2).

It catalyses the reaction carbamoyl phosphate + L-aspartate = N-carbamoyl-L-aspartate + phosphate + H(+). It functions in the pathway pyrimidine metabolism; UMP biosynthesis via de novo pathway; (S)-dihydroorotate from bicarbonate: step 2/3. Functionally, catalyzes the condensation of carbamoyl phosphate and aspartate to form carbamoyl aspartate and inorganic phosphate, the committed step in the de novo pyrimidine nucleotide biosynthesis pathway. In Campylobacter jejuni subsp. jejuni serotype O:2 (strain ATCC 700819 / NCTC 11168), this protein is Aspartate carbamoyltransferase catalytic subunit.